A 1191-amino-acid polypeptide reads, in one-letter code: Major DNA-binding protein (1191 aa).

The short motif at 820 to 821 is the Required for filament formation element; sequence FW. Disordered stretches follow at residues 1122-1146 and 1168-1191; these read TAAG…AADE and AGLI…RSRL. Gly residues predominate over residues 1127–1142; that stretch reads AAGGGGSATEGGGGGA. The required for nuclear localization stretch occupies residues 1173-1191; sequence GDDVRGDDEFELPSKRSRL.

Belongs to the herpesviridae major DNA-binding protein family. Homooligomers. Forms double-helical filaments necessary for the formation of replication compartments within the host nucleus. Interacts with the origin-binding protein. Interacts with the helicase primase complex; this interaction stimulates primer synthesis activity of the helicase-primase complex. Interacts with the DNA polymerase. Interacts with the alkaline exonuclease; this interaction increases its nuclease processivity.

The protein localises to the host nucleus. Functionally, single-stranded DNA-binding protein required for DNA replication. In terms of biological role, plays several crucial roles in viral infection. Participates in the opening of the viral DNA origin to initiate replication by interacting with the origin-binding protein. May disrupt loops, hairpins and other secondary structures present on ssDNA to reduce and eliminate pausing of viral DNA polymerase at specific sites during elongation. Promotes viral DNA recombination by performing strand-transfer, characterized by the ability to transfer a DNA strand from a linear duplex to a complementary single-stranded DNA circle. Can also catalyze the renaturation of complementary single strands. Additionally, reorganizes the host cell nucleus, leading to the formation of prereplicative sites and replication compartments. This process is driven by the protein which can form double-helical filaments in the absence of DNA. The chain is Major DNA-binding protein from Mus musculus (Mouse).